The sequence spans 1218 residues: Protein dispatched (1218 aa).

The chain crosses the membrane as a helical span at residues 21 to 41 (YLVVVSIAVYCVACIIVALVL). Residues 99-135 (VETKLHPNHRRRKNKHKNRNKNKRRKEQNQSSHEHHD) form a disordered region. Residues 104–124 (HPNHRRRKNKHKNRNKNKRRK) show a composition bias toward basic residues. N-linked (GlcNAc...) asparagine glycans are attached at residues Asn127, Asn176, Asn197, Asn264, Asn319, and Asn388. One can recognise an SSD domain in the interval 430 to 624 (AMDLGLENEL…ITWLPASVSI (195 aa)). The next 6 membrane-spanning stretches (helical) occupy residues 443 to 463 (LLLT…ASVW), 473 to 493 (LMSC…YAIV), 504 to 524 (LLAV…FLKI), 570 to 590 (AAAS…ASYS), 598 to 618 (CFGI…ITWL), and 670 to 690 (AYLW…IVFW). Asn767, Asn883, and Asn891 each carry an N-linked (GlcNAc...) asparagine glycan. Transmembrane regions (helical) follow at residues 975–995 (LAVL…VLTV), 996–1016 (SLSI…LNIL), 1019–1039 (IAVS…GIHY), 1058–1078 (IIGP…IMMA), and 1087–1107 (IGVF…FFLM).

It belongs to the dispatched family.

The protein localises to the membrane. In terms of biological role, segment polarity protein which functions in hedgehog (Hh) signaling. Regulates the trafficking and the release of cholesterol-modified hedgehog protein from cells of the posterior compartment (P cells) and is hence required for the effective production of the Hh signal. The sequence is that of Protein dispatched (disp) from Drosophila melanogaster (Fruit fly).